The sequence spans 156 residues: SsrA-binding protein (156 aa).

It belongs to the SmpB family.

Its subcellular location is the cytoplasm. Its function is as follows. Required for rescue of stalled ribosomes mediated by trans-translation. Binds to transfer-messenger RNA (tmRNA), required for stable association of tmRNA with ribosomes. tmRNA and SmpB together mimic tRNA shape, replacing the anticodon stem-loop with SmpB. tmRNA is encoded by the ssrA gene; the 2 termini fold to resemble tRNA(Ala) and it encodes a 'tag peptide', a short internal open reading frame. During trans-translation Ala-aminoacylated tmRNA acts like a tRNA, entering the A-site of stalled ribosomes, displacing the stalled mRNA. The ribosome then switches to translate the ORF on the tmRNA; the nascent peptide is terminated with the 'tag peptide' encoded by the tmRNA and targeted for degradation. The ribosome is freed to recommence translation, which seems to be the essential function of trans-translation. The chain is SsrA-binding protein from Renibacterium salmoninarum (strain ATCC 33209 / DSM 20767 / JCM 11484 / NBRC 15589 / NCIMB 2235).